A 480-amino-acid chain; its full sequence is Acyl-coenzyme A synthetase ACSM6, mitochondrial (480 aa).

Residues 1–21 (MLGRFQPFSLVRSFRLGFEAC) constitute a mitochondrion transit peptide. ATP is bound by residues 226–234 (TKGTTGAPK), 366–371 (EGYGQT), Asp-453, and Arg-468.

The protein belongs to the ATP-dependent AMP-binding enzyme family. As to quaternary structure, monomer. It depends on Mg(2+) as a cofactor. Mn(2+) serves as cofactor.

The protein localises to the mitochondrion. The enzyme catalyses a medium-chain fatty acid + ATP + CoA = a medium-chain fatty acyl-CoA + AMP + diphosphate. In terms of biological role, catalyzes the activation of fatty acids by CoA to produce an acyl-CoA, the first step in fatty acid metabolism. The polypeptide is Acyl-coenzyme A synthetase ACSM6, mitochondrial (ACSM6) (Homo sapiens (Human)).